A 218-amino-acid chain; its full sequence is MRTMNLAGMIDHTLLKPEATEKDIVNLCHEAKQHKFATVCINPAYICTAAKLLHGSGVGVATVIGFPLGATMTEIKVQEIFAAKAHGAREVDIVINIGWAKSGNWEAVAKDITRAVEAAHCCGVTIKVIIETSLLTEEEKQKAAEIVKASGADYIKTSTGFAGGGATVEDVRNLKAWVGQSVKVKASGGIRSRETALQMVEAGADRLGTSSGVQIITV.

The active-site Proton donor/acceptor is the Asp-92. Lys-156 functions as the Schiff-base intermediate with acetaldehyde in the catalytic mechanism. Lys-185 (proton donor/acceptor) is an active-site residue.

Belongs to the DeoC/FbaB aldolase family. DeoC type 1 subfamily.

The protein resides in the cytoplasm. It catalyses the reaction 2-deoxy-D-ribose 5-phosphate = D-glyceraldehyde 3-phosphate + acetaldehyde. Its pathway is carbohydrate degradation; 2-deoxy-D-ribose 1-phosphate degradation; D-glyceraldehyde 3-phosphate and acetaldehyde from 2-deoxy-alpha-D-ribose 1-phosphate: step 2/2. Functionally, catalyzes a reversible aldol reaction between acetaldehyde and D-glyceraldehyde 3-phosphate to generate 2-deoxy-D-ribose 5-phosphate. The chain is Deoxyribose-phosphate aldolase from Desulfitobacterium hafniense (strain DSM 10664 / DCB-2).